The chain runs to 411 residues: Arginine deiminase (411 aa).

The active-site Amidino-cysteine intermediate is Cys-401.

It belongs to the arginine deiminase family.

Its subcellular location is the cytoplasm. It catalyses the reaction L-arginine + H2O = L-citrulline + NH4(+). It participates in amino-acid degradation; L-arginine degradation via ADI pathway; carbamoyl phosphate from L-arginine: step 1/2. The protein is Arginine deiminase of Streptococcus pyogenes serotype M2 (strain MGAS10270).